A 3412-amino-acid chain; its full sequence is Genome polyprotein (3412 aa).

The Cytoplasmic segment spans residues Met-1–Glu-104. The tract at residues Pro-38–Leu-72 is hydrophobic; homodimerization of capsid protein C. The propeptide at Ser-102–Gly-121 is ER anchor for the capsid protein C, removed in mature form by serine protease NS3. The helical transmembrane segment at Met-105–Val-125 threads the bilayer. Residues Arg-126–Arg-244 lie on the Extracellular side of the membrane. Asn-134 and Asn-150 each carry an N-linked (GlcNAc...) asparagine; by host glycan. Residues Trp-245–Asn-265 traverse the membrane as a helical segment. The Cytoplasmic portion of the chain corresponds to Asn-266 to Arg-270. Residues Val-271–Ser-285 form a helical membrane-spanning segment. Over Ala-286–Leu-730 the chain is Extracellular. Intrachain disulfides connect Cys-288–Cys-315, Cys-345–Cys-401, Cys-345–Cys-406, Cys-359–Cys-390, Cys-377–Cys-401, Cys-377–Cys-406, Cys-467–Cys-568, and Cys-585–Cys-615. Positions Asp-383–Gly-396 are fusion peptide. A helical transmembrane segment spans residues Phe-731–Ile-751. Topologically, residues Asn-752 to Thr-757 are extracellular. A helical transmembrane segment spans residues Met-758–Ala-778. The Extracellular segment spans residues Asp-779–Glu-1132. Intrachain disulfides connect Cys-782-Cys-793, Cys-833-Cys-921, Cys-957-Cys-1002, Cys-1058-Cys-1107, Cys-1069-Cys-1091, and Cys-1090-Cys-1094. N-linked (GlcNAc...) asparagine; by host glycosylation is found at Asn-908 and Asn-986. The chain crosses the membrane as a helical span at residues Val-1133–Arg-1153. At Arg-1154–Ala-1201 the chain is on the cytoplasmic side. Residues Met-1202 to Leu-1222 form a helical membrane-spanning segment. At Arg-1223–Pro-1287 the chain is on the lumenal side. The helical transmembrane segment at Met-1288–Val-1308 threads the bilayer. The Cytoplasmic segment spans residues Leu-1309–Ser-1355. Residues Ile-1356 to Phe-1376 form a helical membrane-spanning segment. Over Gln-1377–Asp-1378 the chain is Lumenal. The chain crosses the membrane as a helical span at residues Met-1379–Ala-1399. Residues Gly-1400–Leu-1456 lie on the Cytoplasmic side of the membrane. An interacts with and activates NS3 protease region spans residues Leu-1407 to Val-1446. Positions Ala-1457–Leu-1477 form an intramembrane region, helical. Over His-1478–Ala-2157 the chain is Cytoplasmic. In terms of domain architecture, Peptidase S7 spans Ser-1485 to Leu-1665. Residues His-1537, Asp-1561, and Ser-1622 each act as charge relay system; for serine protease NS3 activity in the active site. One can recognise a Helicase ATP-binding domain in the interval Pro-1669–Gln-1825. Residues Lys-1673–Met-1676 form an important for RNA-binding region. Phe-1682 to Thr-1689 lines the ATP pocket. Residues Asp-1773–His-1776 carry the DEAH box motif. Positions Gly-1836–Tyr-1997 constitute a Helicase C-terminal domain. N6-acetyllysine; by host is present on Lys-1877. The interval Ala-1942 to Ser-1963 is disordered. A helical transmembrane segment spans residues Met-2158–Phe-2178. Topologically, residues Met-2179–Arg-2186 are lumenal. An intramembrane region (helical) is located at residues Met-2187–Lys-2207. Residues Pro-2208 to Thr-2209 lie on the Lumenal side of the membrane. Residues His-2210 to Gly-2230 traverse the membrane as a helical segment. The Cytoplasmic segment spans residues Gln-2231–Ala-2241. The chain crosses the membrane as a helical span at residues Tyr-2242 to Leu-2262. At Glu-2263–Pro-2293 the chain is on the lumenal side. The segment at residues Gly-2294 to Trp-2314 is an intramembrane region (helical). Residues Ile-2315–Ser-2360 lie on the Lumenal side of the membrane. A helical membrane pass occupies residues Ile-2361 to Ile-2380. Over Leu-2381–Pro-2421 the chain is Cytoplasmic. The chain crosses the membrane as a helical span at residues Ala-2422–Ala-2442. The Lumenal segment spans residues Met-2443–Arg-2445. The chain crosses the membrane as a helical span at residues Thr-2446–Glu-2466. Over Gly-2467–Leu-3411 the chain is Cytoplasmic. In terms of domain architecture, mRNA cap 0-1 NS5-type MT spans Gly-2508–Ser-2772. Residue Ser-2563 participates in S-adenosyl-L-methionine binding. A Phosphoserine modification is found at Ser-2563. Catalysis depends on Lys-2568, which acts as the For 2'-O-MTase activity. S-adenosyl-L-methionine is bound by residues Gly-2593, Trp-2594, Thr-2611, Leu-2612, Asp-2638, and Val-2639. The For 2'-O-MTase activity role is filled by Asp-2653. Residue Ile-2654 participates in S-adenosyl-L-methionine binding. Catalysis depends on for 2'-O-MTase activity residues Lys-2689 and Glu-2725. Residue Tyr-2727 participates in S-adenosyl-L-methionine binding. The Nuclear localization signal signature appears at Arg-2879–Arg-2912. Zn(2+) contacts are provided by Glu-2946, His-2950, Cys-2955, and Cys-2958. Positions Gly-3036–Ala-3188 constitute a RdRp catalytic domain. Positions 3223, 3239, and 3358 each coordinate Zn(2+).

In the N-terminal section; belongs to the class I-like SAM-binding methyltransferase superfamily. mRNA cap 0-1 NS5-type methyltransferase family. In terms of assembly, homodimer. Interacts (via N-terminus) with host EXOC1 (via C-terminus); this interaction results in EXOC1 degradation through the proteasome degradation pathway. Forms heterodimers with envelope protein E in the endoplasmic reticulum and Golgi. As to quaternary structure, homodimer; in the endoplasmic reticulum and Golgi. Interacts with protein prM. Interacts with non-structural protein 1. In terms of assembly, homodimer; Homohexamer when secreted. Interacts with envelope protein E. Interacts (via N-terminus) with serine protease NS3. As to quaternary structure, forms a heterodimer with serine protease NS3. May form homooligomers. In terms of assembly, forms a heterodimer with NS2B. Interacts with non-structural protein 2A (via N-terminus). Interacts with NS4B. Interacts with unphosphorylated RNA-directed RNA polymerase NS5; this interaction stimulates RNA-directed RNA polymerase NS5 guanylyltransferase activity. NS3 interacts with host PDCD6IP; this interaction contributes to virion release. Interacts with serine protease NS3. As to quaternary structure, homodimer. Interacts with host STAT2; this interaction prevents the establishment of cellular antiviral state. Interacts with serine protease NS3. Interacts with host TRIM23; this interaction leads to NS5 ubiquitination. In terms of processing, specific enzymatic cleavages in vivo yield mature proteins. The nascent capsid protein C contains a C-terminal hydrophobic domain that act as a signal sequence for translocation of prM into the lumen of the ER. Mature capsid protein C is cleaved at a site upstream of this hydrophobic domain by NS3. prM is cleaved in post-Golgi vesicles by a host furin, releasing the mature small envelope protein M, and peptide pr. Non-structural protein 2A-alpha, a C-terminally truncated form of non-structural protein 2A, results from partial cleavage by NS3. Specific enzymatic cleavages in vivo yield mature proteins peptide 2K acts as a signal sequence and is removed from the N-terminus of NS4B by the host signal peptidase in the ER lumen. Signal cleavage at the 2K-4B site requires a prior NS3 protease-mediated cleavage at the 4A-2K site. Cleaved in post-Golgi vesicles by a host furin, releasing the mature small envelope protein M, and peptide pr. This cleavage is incomplete as up to 30% of viral particles still carry uncleaved prM. Post-translationally, N-glycosylated. In terms of processing, N-glycosylated. The excreted form is glycosylated and this is required for efficient secretion of the protein from infected cells. Polyubiquitinated; ubiquitination is probably mediated by host TRIM23 and is prerequisite for NS5-STAT2 interaction. NS5 is not ISGylated or sumoylated. Post-translationally, acetylated by host KAT5. Acetylation modulates NS3 RNA-binding and unwinding activities and plays an important positive role for viral replication. In terms of processing, phosphorylated on serines residues. This phosphorylation may trigger NS5 nuclear localization.

It localises to the virion. It is found in the host nucleus. Its subcellular location is the host cytoplasm. The protein resides in the host perinuclear region. The protein localises to the secreted. It localises to the virion membrane. It is found in the host endoplasmic reticulum membrane. The catalysed reaction is Selective hydrolysis of -Xaa-Xaa-|-Yaa- bonds in which each of the Xaa can be either Arg or Lys and Yaa can be either Ser or Ala.. The enzyme catalyses RNA(n) + a ribonucleoside 5'-triphosphate = RNA(n+1) + diphosphate. It catalyses the reaction a ribonucleoside 5'-triphosphate + H2O = a ribonucleoside 5'-diphosphate + phosphate + H(+). It carries out the reaction ATP + H2O = ADP + phosphate + H(+). The catalysed reaction is a 5'-end (5'-triphosphoguanosine)-ribonucleoside in mRNA + S-adenosyl-L-methionine = a 5'-end (N(7)-methyl 5'-triphosphoguanosine)-ribonucleoside in mRNA + S-adenosyl-L-homocysteine. The enzyme catalyses a 5'-end (N(7)-methyl 5'-triphosphoguanosine)-ribonucleoside in mRNA + S-adenosyl-L-methionine = a 5'-end (N(7)-methyl 5'-triphosphoguanosine)-(2'-O-methyl-ribonucleoside) in mRNA + S-adenosyl-L-homocysteine + H(+). Functionally, plays a role in virus budding by binding to the cell membrane and gathering the viral RNA into a nucleocapsid that forms the core of a mature virus particle. During virus entry, may induce genome penetration into the host cytoplasm after hemifusion induced by the surface proteins. Can migrate to the cell nucleus where it modulates host functions. Its function is as follows. Inhibits RNA silencing by interfering with host Dicer. Prevents premature fusion activity of envelope proteins in trans-Golgi by binding to envelope protein E at pH6.0. After virion release in extracellular space, gets dissociated from E dimers. In terms of biological role, acts as a chaperone for envelope protein E during intracellular virion assembly by masking and inactivating envelope protein E fusion peptide. prM is the only viral peptide matured by host furin in the trans-Golgi network probably to avoid catastrophic activation of the viral fusion activity in acidic Golgi compartment prior to virion release. prM-E cleavage is inefficient, and many virions are only partially matured. These uncleaved prM would play a role in immune evasion. Functionally, may play a role in virus budding. Exerts cytotoxic effects by activating a mitochondrial apoptotic pathway through M ectodomain. May display a viroporin activity. Its function is as follows. Binds to host cell surface receptor and mediates fusion between viral and cellular membranes. Envelope protein is synthesized in the endoplasmic reticulum in the form of heterodimer with protein prM. They play a role in virion budding in the ER, and the newly formed immature particle is covered with 60 spikes composed of heterodimer between precursor prM and envelope protein E. The virion is transported to the Golgi apparatus where the low pH causes dissociation of PrM-E heterodimers and formation of E homodimers. prM-E cleavage is inefficient, and many virions are only partially matured. These uncleaved prM would play a role in immune evasion. Involved in immune evasion, pathogenesis and viral replication. Once cleaved off the polyprotein, is targeted to three destinations: the viral replication cycle, the plasma membrane and the extracellular compartment. Essential for viral replication. Required for formation of the replication complex and recruitment of other non-structural proteins to the ER-derived membrane structures. Excreted as a hexameric lipoparticle that plays a role against host immune response. Antagonizing the complement function. Binds to the host macrophages and dendritic cells. Inhibits signal transduction originating from Toll-like receptor 3 (TLR3). In terms of biological role, component of the viral RNA replication complex that functions in virion assembly and antagonizes the host immune response. Functionally, required cofactor for the serine protease function of NS3. May have membrane-destabilizing activity and form viroporins. Its function is as follows. Displays three enzymatic activities: serine protease, NTPase and RNA helicase. NS3 serine protease, in association with NS2B, performs its autocleavage and cleaves the polyprotein at dibasic sites in the cytoplasm: C-prM, NS2A-NS2B, NS2B-NS3, NS3-NS4A, NS4A-2K and NS4B-NS5. NS3 RNA helicase binds RNA and unwinds dsRNA in the 3' to 5' direction. Also plays a role in virus assembly. Regulates the ATPase activity of the NS3 helicase activity. NS4A allows NS3 helicase to conserve energy during unwinding. In terms of biological role, functions as a signal peptide for NS4B and is required for the interferon antagonism activity of the latter. Functionally, induces the formation of ER-derived membrane vesicles where the viral replication takes place. Inhibits interferon (IFN)-induced host STAT1 phosphorylation and nuclear translocation, thereby preventing the establishment of cellular antiviral state by blocking the IFN-alpha/beta pathway. Its function is as follows. Replicates the viral (+) and (-) RNA genome, and performs the capping of genomes in the cytoplasm. NS5 methylates viral RNA cap at guanine N-7 and ribose 2'-O positions. Besides its role in RNA genome replication, also prevents the establishment of cellular antiviral state by blocking the interferon-alpha/beta (IFN-alpha/beta) signaling pathway. IFN-I induces binding of NS5 to host IFN-activated transcription factor STAT2, preventing its transcriptional activity. Host TRIM23 is the E3 ligase that interacts with and polyubiquitinates NS5 to promote its binding to STAT2 and trigger IFN-I signaling inhibition. The chain is Genome polyprotein from Aedes aegypti (Yellowfever mosquito).